The primary structure comprises 641 residues: Putative ABC transporter ATP-binding protein MA_0870 (641 aa).

The 241-residue stretch at 10–250 (IEIKDLWYTY…IEVFHRLGLR (241 aa)) folds into the ABC transporter 1 domain. 44–51 (GPTGCGKS) is a binding site for ATP. The interval 286–332 (VKTPRNFSNPEEETGRRTDPAERNEFVNTGSGNIKYGDNRSENKGSE) is disordered. 2 stretches are compositionally biased toward basic and acidic residues: residues 298–310 (ETGR…ERNE) and 322–332 (GDNRSENKGSE). Residues 338-566 (ISIRDLWSGY…IEILKQASLT (229 aa)) enclose the ABC transporter 2 domain. 371–378 (GTNGSGKS) is a binding site for ATP.

This sequence belongs to the ABC transporter superfamily.

The protein resides in the cell membrane. Its function is as follows. Probably part of an ABC transporter complex. Responsible for energy coupling to the transport system. The sequence is that of Putative ABC transporter ATP-binding protein MA_0870 from Methanosarcina acetivorans (strain ATCC 35395 / DSM 2834 / JCM 12185 / C2A).